The chain runs to 74 residues: ATP synthase subunit 9, mitochondrial (74 aa).

2 helical membrane-spanning segments follow: residues isoleucine 8–phenylalanine 28 and isoleucine 50–isoleucine 70.

This sequence belongs to the ATPase C chain family. F-type ATPases have 2 components, CF(1) - the catalytic core - and CF(0) - the membrane proton channel. CF(1) has five subunits: alpha(3), beta(3), gamma(1), delta(1), epsilon(1). CF(0) has three main subunits: a, b and c.

The protein resides in the mitochondrion membrane. In terms of biological role, this protein is one of the chains of the nonenzymatic membrane component (F0) of mitochondrial ATPase. The sequence is that of ATP synthase subunit 9, mitochondrial (ATP9) from Brassica napus (Rape).